We begin with the raw amino-acid sequence, 85 residues long: Large ribosomal subunit protein bL31B (85 aa).

It belongs to the bacterial ribosomal protein bL31 family. Type B subfamily. Part of the 50S ribosomal subunit.

The polypeptide is Large ribosomal subunit protein bL31B (Staphylococcus haemolyticus (strain JCSC1435)).